Here is a 267-residue protein sequence, read N- to C-terminus: uncharacterized protein (267 aa).

This sequence belongs to the lin-8 family.

This is an uncharacterized protein from Caenorhabditis elegans.